The chain runs to 413 residues: Exodeoxyribonuclease 7 large subunit (413 aa).

This sequence belongs to the XseA family. Heterooligomer composed of large and small subunits.

Its subcellular location is the cytoplasm. The enzyme catalyses Exonucleolytic cleavage in either 5'- to 3'- or 3'- to 5'-direction to yield nucleoside 5'-phosphates.. In terms of biological role, bidirectionally degrades single-stranded DNA into large acid-insoluble oligonucleotides, which are then degraded further into small acid-soluble oligonucleotides. The protein is Exodeoxyribonuclease 7 large subunit of Corynebacterium efficiens (strain DSM 44549 / YS-314 / AJ 12310 / JCM 11189 / NBRC 100395).